The following is a 325-amino-acid chain: MRNHAKISQVAHYLPKKIVTNDDLAQRMETSDEWIRSRTGIGQRHIVTGETTSDLASQVARKLLEKSQLDASEIDFIIVATITPDASMPSTAAMVQAAIGAKNAFAYDLVAACSGFVFALSTAEKLLASGVYKRGLVIGAETLSRSVDWSDRSTAVLFGDGAGGVLLEACEQPTFLAEILRTDGGRGASLTAGIDQKETPFSTQSCQQPFIQMEGRAIFEFATRDVTATMAELLEQADMTVDCVDYFLLHQANIRILDKMARKLGVAREKFPANMDKYGNTSAASLPILLSECVESGMLRLDGSQTILMAGFGGGLTWGTLLLQL.

Residues Cys113 and His250 contribute to the active site. Positions 251 to 255 are ACP-binding; the sequence is QANIR. Residue Asn280 is part of the active site.

This sequence belongs to the thiolase-like superfamily. FabH family. Homodimer.

The protein resides in the cytoplasm. The catalysed reaction is malonyl-[ACP] + acetyl-CoA + H(+) = 3-oxobutanoyl-[ACP] + CO2 + CoA. It participates in lipid metabolism; fatty acid biosynthesis. In terms of biological role, catalyzes the condensation reaction of fatty acid synthesis by the addition to an acyl acceptor of two carbons from malonyl-ACP. Catalyzes the first condensation reaction which initiates fatty acid synthesis and may therefore play a role in governing the total rate of fatty acid production. Possesses both acetoacetyl-ACP synthase and acetyl transacylase activities. Its substrate specificity determines the biosynthesis of branched-chain and/or straight-chain of fatty acids. This is Beta-ketoacyl-[acyl-carrier-protein] synthase III from Streptococcus suis (strain 98HAH33).